The sequence spans 290 residues: Glutamate racemase (290 aa).

Substrate contacts are provided by residues 24-25 (DS) and 56-57 (YG). Cys-87 functions as the Proton donor/acceptor in the catalytic mechanism. 88 to 89 (NT) serves as a coordination point for substrate. The Proton donor/acceptor role is filled by Cys-199. 200–201 (TH) serves as a coordination point for substrate. The interval 271–290 (GADGASLPDPPSPRIELTTT) is disordered.

Belongs to the aspartate/glutamate racemases family.

The enzyme catalyses L-glutamate = D-glutamate. It functions in the pathway cell wall biogenesis; peptidoglycan biosynthesis. Provides the (R)-glutamate required for cell wall biosynthesis. This chain is Glutamate racemase, found in Deinococcus radiodurans (strain ATCC 13939 / DSM 20539 / JCM 16871 / CCUG 27074 / LMG 4051 / NBRC 15346 / NCIMB 9279 / VKM B-1422 / R1).